A 519-amino-acid polypeptide reads, in one-letter code: Sugar transport protein MST5 (519 aa).

The Cytoplasmic portion of the chain corresponds to 1-18 (MAGGAMVQTVGGKTYPGK). Residues 19-39 (MTAFVFFTCLVASSGGLIFGY) form a helical membrane-spanning segment. The Extracellular portion of the chain corresponds to 40–80 (DIGISGGVTSMDSFLSEFFPSVYAQAKASKDTNQYCKFDSQ). The helical transmembrane segment at 81 to 101 (LLTLFTSSLYLAALATSFVAA) threads the bilayer. At 102-110 (WVTRVFGRK) the chain is on the cytoplasmic side. Residues 111–127 (WSMFCGGVTFLAGSALN) form a helical membrane-spanning segment. Residue Gly128 is a topological domain, extracellular. A helical transmembrane segment spans residues 129 to 149 (AATDVMMLILGRILLGIGVGF). Topologically, residues 150–167 (ANQSVPLYLSEMAPANLR) are cytoplasmic. Residues 168–188 (GMLNIGFQLMTTIGILSANLI) form a helical membrane-spanning segment. Residues 189–202 (NYATSSIEGGWGWR) lie on the Extracellular side of the membrane. The chain crosses the membrane as a helical span at residues 203-223 (IGLGLAGVPALIITLGALVLP). Residues 224 to 295 (DTPNSLIARG…IAILIPCFQQ (72 aa)) lie on the Cytoplasmic side of the membrane. The helical transmembrane segment at 296–316 (LTGINVIMFYAPVLFLTIGFA) threads the bilayer. Residues 317–321 (GDASL) are Extracellular-facing. A helical membrane pass occupies residues 322–342 (MSAVITGLVNMFATVVSIISV). Over 343 to 357 (DRLGRRVLFLQGGTQ) the chain is Cytoplasmic. Residues 358 to 378 (MFISQVVVGTLIALQFGVAGV) traverse the membrane as a helical segment. The Extracellular segment spans residues 379–386 (GEMSRSYA). Residues 387–407 (ILLVLFICMYVAGFAWSWGPL) traverse the membrane as a helical segment. Residues 408-426 (GWLVPSEVFALEIRSAGQS) lie on the Cytoplasmic side of the membrane. A helical membrane pass occupies residues 427 to 447 (IAVCVNMMLTFVIGQAFLTML). Topologically, residues 448–451 (CHLK) are extracellular. A helical membrane pass occupies residues 452-472 (FGLFYFFAGWMLVMTTFVALF). The Cytoplasmic portion of the chain corresponds to 473–519 (LPETKGVPIEEMNHVWSRHWFWGSYVTAHDVAGAGAGGGGNRRSHNV).

Belongs to the major facilitator superfamily. Sugar transporter (TC 2.A.1.1) family. As to expression, expressed in panicles before heading. Expressed in flowers before pollination.

It is found in the membrane. Its function is as follows. Mediates active uptake of hexoses by sugar:proton symport. Can transport glucose, xylose and 3-O-methylglucose. May play a role at the early stage of seed development. In Oryza sativa subsp. japonica (Rice), this protein is Sugar transport protein MST5.